The sequence spans 303 residues: Aspartate carbamoyltransferase catalytic subunit (303 aa).

Carbamoyl phosphate is bound by residues R51 and T52. L-aspartate is bound at residue K80. Residues R101, H129, and Q132 each coordinate carbamoyl phosphate. Residues R162 and R221 each contribute to the L-aspartate site. The carbamoyl phosphate site is built by L260 and P261.

This sequence belongs to the aspartate/ornithine carbamoyltransferase superfamily. ATCase family. Heterooligomer of catalytic and regulatory chains.

The enzyme catalyses carbamoyl phosphate + L-aspartate = N-carbamoyl-L-aspartate + phosphate + H(+). It functions in the pathway pyrimidine metabolism; UMP biosynthesis via de novo pathway; (S)-dihydroorotate from bicarbonate: step 2/3. In terms of biological role, catalyzes the condensation of carbamoyl phosphate and aspartate to form carbamoyl aspartate and inorganic phosphate, the committed step in the de novo pyrimidine nucleotide biosynthesis pathway. The protein is Aspartate carbamoyltransferase catalytic subunit of Saccharolobus solfataricus (strain ATCC 35092 / DSM 1617 / JCM 11322 / P2) (Sulfolobus solfataricus).